We begin with the raw amino-acid sequence, 2130 residues long: Highly reducing polyketide synthase anuA (2130 aa).

The Ketosynthase family 3 (KS3) domain maps to 1-213 (MKAGVLSGTS…GANCHVILEQ (213 aa)). A Malonyl-CoA:ACP transacylase (MAT) domain is found at 317–644 (FVFTGQGSQW…SFAGNLWLKG (328 aa)). The segment at 701 to 836 (HELLGSLLTG…GSIAIHPRNA (136 aa)) is N-terminal hotdog fold. Positions 701-1000 (HELLGSLLTG…LSPYQSTSQA (300 aa)) constitute a PKS/mFAS DH domain. The active-site Proton acceptor; for dehydratase activity is the His733. The tract at residues 849-1000 (LESTAKRTWY…LSPYQSTSQA (152 aa)) is C-terminal hotdog fold. Catalysis depends on Asp914, which acts as the Proton donor; for dehydratase activity. An Enoyl reductase (ER) domain is found at 1405 to 1722 (GQLDTIYFQQ…SRSRIGKVAI (318 aa)). The Ketoreductase (KR) domain maps to 1747-1927 (SYVMVGCLGG…AVAVGLGMIS (181 aa)). Residues 2047–2125 (TLDEAVLDHI…SLRDLAMTSL (79 aa)) enclose the Carrier domain. At Ser2084 the chain carries O-(pantetheine 4'-phosphoryl)serine.

Pantetheine 4'-phosphate is required as a cofactor.

It functions in the pathway secondary metabolite biosynthesis. Its function is as follows. Highly reducing polyketide synthase; part of the gene cluster that mediates the biosynthesis of annullatin D, an alkylated aromatic polyketide with a fused dihydrobenzofuran lactone ring system that exhibits potent agonistic activities toward the cannabinoid receptors. The annullatin backbone 2-hydroxymethyl-3-pentylphenol is assembled from one acetyl-CoA starter unit and 5 malonyl-CoA elongation units by cooperation of the highly reducing polyketide synthase anuA, the short-chain dehydrogenase anuB and the oxidoreductase anuC, before being hydroxylated at the C-5 alkyl chain by the cytochrome P450 monooxygenase anuE to form (8S)-annullatin E. The prenyltransferase anuH subsequently installs one isoprenyl group at the benzene ring to form (8S)-annullatin J. Enzymatic or nonenzymatic dihydro-benzofuran ring formation between the prenyl and the phenolic hydroxyl groups in (8S)-annullatin J results in two diastereomers (2S,9S)-annullatin H and compound 12. The intermediate (2S,9S)-annullatin H is then converted to (2S,9S)-annullatin D by the FAD-linked oxidoreductase anuG-catalyzed five-member lactone ring formation. The isomer 12 acts as a substrate for the short-chain dehydrogenase anuF and is oxidized to (2R)-annullatin F, which is subsequently acetylated by an acetyltransferase leading to (2R)-annullatin G formation. The remaining enzymes identified within the cluster, anuD, anuI and anuJ, seem not to be involved in annullatin biosynthesis. This chain is Highly reducing polyketide synthase anuA, found in Penicillium roqueforti (strain FM164).